The primary structure comprises 244 residues: uncharacterized protein (244 aa).

Residues 5 to 244 form the GP-PDE domain; the sequence is QLLLAHRGYS…ANKKFEIKIN (240 aa).

This sequence to glycerophosphoryl diester phosphodiesterases (EC 3.1.4.46). To M.genitalium MG385.

This is an uncharacterized protein from Mycoplasma genitalium (strain ATCC 33530 / DSM 19775 / NCTC 10195 / G37) (Mycoplasmoides genitalium).